The sequence spans 346 residues: Alkylated DNA repair protein ALKBH8 homolog (346 aa).

The disordered stretch occupies residues 1–21; the sequence is MVQPRFVRPTQSSPSSISGEP. Positions 12–21 are enriched in low complexity; it reads SSPSSISGEP. The RRM domain maps to 24-102; that stretch reads SNLYVANCGP…RSLHIRYSVL (79 aa). In terms of domain architecture, Fe2OG dioxygenase spans 208-328; that stretch reads NLDQLTVNEY…RVSFTLRKVR (121 aa). 3 residues coordinate Fe cation: histidine 226, aspartate 228, and histidine 298. Arginine 319 and arginine 325 together coordinate 2-oxoglutarate.

It belongs to the alkB family. The cofactor is Fe(2+).

Functionally, binds tRNA and catalyzes the iron and alpha-ketoglutarate dependent hydroxylation of 5-methylcarboxymethyl uridine at the wobble position of the anticodon loop in tRNA via its dioxygenase domain, giving rise to 5-(S)-methoxycarbonylhydroxymethyluridine. This is Alkylated DNA repair protein ALKBH8 homolog from Arabidopsis thaliana (Mouse-ear cress).